Here is a 209-residue protein sequence, read N- to C-terminus: Lipopolysaccharide export system protein LptC (209 aa).

A helical transmembrane segment spans residues 7–26 (NIRWNVILGVIALCALAWFY).

Belongs to the LptC family. In terms of assembly, component of the lipopolysaccharide transport and assembly complex. Interacts with LptA and the LptBFG transporter complex.

The protein resides in the cell inner membrane. Its function is as follows. Involved in the assembly of lipopolysaccharide (LPS). Required for the translocation of LPS from the inner membrane to the outer membrane. Facilitates the transfer of LPS from the inner membrane to the periplasmic protein LptA. Could be a docking site for LptA. This chain is Lipopolysaccharide export system protein LptC, found in Haemophilus influenzae (strain ATCC 51907 / DSM 11121 / KW20 / Rd).